The primary structure comprises 186 residues: Cytochrome b6-f complex iron-sulfur subunit (186 aa).

A helical membrane pass occupies residues 16-38; the sequence is LLSFVTGGAIAATTAATLYPVVL. The Rieske domain occupies 74–163; sequence GEPVLTLGLD…ATVSDDKVLI (90 aa). Cys-109, His-111, Cys-127, and His-130 together coordinate [2Fe-2S] cluster. A disulfide bridge links Cys-114 with Cys-129.

The protein belongs to the Rieske iron-sulfur protein family. As to quaternary structure, the 4 large subunits of the cytochrome b6-f complex are cytochrome b6, subunit IV (17 kDa polypeptide, PetD), cytochrome f and the Rieske protein, while the 4 small subunits are PetG, PetL, PetM and PetN. The complex functions as a dimer. [2Fe-2S] cluster is required as a cofactor.

The protein localises to the cell inner membrane. The catalysed reaction is 2 oxidized [plastocyanin] + a plastoquinol + 2 H(+)(in) = 2 reduced [plastocyanin] + a plastoquinone + 4 H(+)(out). Component of the cytochrome b6-f complex, which mediates electron transfer between photosystem II (PSII) and photosystem I (PSI), cyclic electron flow around PSI, and state transitions. The sequence is that of Cytochrome b6-f complex iron-sulfur subunit from Gloeobacter violaceus (strain ATCC 29082 / PCC 7421).